Reading from the N-terminus, the 475-residue chain is MSPQTETKASVGFKAGVKEYKLNYYTPDYETKDTDILAAFRLTPQPGVPPEEAGAAVAAESSTGTWTTVWTDGLTSLDRYKGRCYHIEPVAGEENQYIAYVAYPLDLFEEGSVTNMFTSIVGNVFGFKALRALRLEDLRIPPAYTKTFQGPPHGIQVERDKLNKYGRPLLGCTIKPKLGLSAKNYGRAVYECLRGGLDFTKDDENVNSQPFMRWRDRFVFCAEALYKAQAETGEIKGHYLNATAGTCEEMIKRAVFARELGVPIVMHDYLTGGFTANTSLAHYCRDNGLLLHIHRAMHAVIDRQKNHGIHFRVLAKALRMSGGDHIHAGTVVGKLEGERDITLGFVDLLRDDFIEKDRSRGLYFTQDWVSLPGVLPVASGGIHVWHMPALTEIFGDDSVLQFGGGTLGHPWGNAPGAVANRVALEACVQARNEGRDLAREGNEVIREASKWSPELAAACEIWKEIKFEFEAMDTV.

Positions 1 to 2 are excised as a propeptide; sequence MS. Pro3 is modified (N-acetylproline). Lys14 carries the N6,N6,N6-trimethyllysine modification. Asn123 and Thr173 together coordinate substrate. Lys175 serves as the catalytic Proton acceptor. Lys177 contacts substrate. Residues Lys201, Asp203, and Glu204 each contribute to the Mg(2+) site. Lys201 carries the N6-carboxylysine modification. The active-site Proton acceptor is His294. Substrate is bound by residues Arg295, His327, and Ser379.

It belongs to the RuBisCO large chain family. Type I subfamily. As to quaternary structure, heterohexadecamer of 8 large chains and 8 small chains; disulfide-linked. The disulfide link is formed within the large subunit homodimers. It depends on Mg(2+) as a cofactor. In terms of processing, the disulfide bond which can form in the large chain dimeric partners within the hexadecamer appears to be associated with oxidative stress and protein turnover.

The protein localises to the plastid. It localises to the chloroplast. It catalyses the reaction 2 (2R)-3-phosphoglycerate + 2 H(+) = D-ribulose 1,5-bisphosphate + CO2 + H2O. The enzyme catalyses D-ribulose 1,5-bisphosphate + O2 = 2-phosphoglycolate + (2R)-3-phosphoglycerate + 2 H(+). Its function is as follows. RuBisCO catalyzes two reactions: the carboxylation of D-ribulose 1,5-bisphosphate, the primary event in carbon dioxide fixation, as well as the oxidative fragmentation of the pentose substrate in the photorespiration process. Both reactions occur simultaneously and in competition at the same active site. The sequence is that of Ribulose bisphosphate carboxylase large chain from Chloranthus spicatus (Chulantree).